The sequence spans 292 residues: High-affinity heme uptake system protein IsdE (292 aa).

The first 19 residues, 1 to 19 (MRIIKYLTILVISVVILTS), serve as a signal peptide directing secretion. Cys-20 carries the N-palmitoyl cysteine lipid modification. Cys-20 is lipidated: S-diacylglycerol cysteine. A Fe/B12 periplasmic-binding domain is found at 35 to 291 (RIVPTTVALT…QLYDLFYKDK (257 aa)). Heme-binding residues include Val-41, Ala-42, Ser-60, Tyr-61, Met-78, and His-229.

It belongs to the bacterial solute-binding protein 8 family. Heme b serves as cofactor.

Its subcellular location is the cell membrane. Involved in heme (porphyrin) scavenging. Binds Fe(2+) and Fe(3+) heme but the largest fraction is Fe(2+) heme. Functions as a high-affinity heme binding protein and probably has a role in relaying heme-iron from cell wall-anchored isd proteins receptors to the probable permease IsdF. The chain is High-affinity heme uptake system protein IsdE (isdE) from Staphylococcus aureus (strain Mu3 / ATCC 700698).